The primary structure comprises 464 residues: Soluble pyridine nucleotide transhydrogenase (464 aa).

An FAD-binding site is contributed by 35–44 (DSRRQVGGNC).

The protein belongs to the class-I pyridine nucleotide-disulfide oxidoreductase family. FAD serves as cofactor.

It localises to the cytoplasm. The enzyme catalyses NAD(+) + NADPH = NADH + NADP(+). Functionally, conversion of NADPH, generated by peripheral catabolic pathways, to NADH, which can enter the respiratory chain for energy generation. The sequence is that of Soluble pyridine nucleotide transhydrogenase from Pseudomonas fluorescens (strain ATCC BAA-477 / NRRL B-23932 / Pf-5).